The primary structure comprises 221 residues: Large ribosomal subunit protein uL3 (221 aa).

The disordered stretch occupies residues 131–165 (HNQSRGPETHGSRHHRRPGSMGPIKGKIKGKKLPG).

Belongs to the universal ribosomal protein uL3 family. In terms of assembly, part of the 50S ribosomal subunit. Forms a cluster with proteins L14 and L19.

One of the primary rRNA binding proteins, it binds directly near the 3'-end of the 23S rRNA, where it nucleates assembly of the 50S subunit. In Phytoplasma australiense, this protein is Large ribosomal subunit protein uL3.